The following is a 209-amino-acid chain: uncharacterized protein (209 aa).

This is an uncharacterized protein from Magallana gigas (Pacific oyster).